We begin with the raw amino-acid sequence, 171 residues long: UPF0398 protein MGAS10270_Spy1470 (171 aa).

This sequence belongs to the UPF0398 family.

The chain is UPF0398 protein MGAS10270_Spy1470 from Streptococcus pyogenes serotype M2 (strain MGAS10270).